We begin with the raw amino-acid sequence, 632 residues long: Golgin subfamily A member 8J (632 aa).

The segment at 1 to 76 (MAEETQHNKL…TSSATLKDLE (76 aa)) is disordered. Coiled coils occupy residues 86 to 154 (LDSR…HMKR) and 220 to 421 (LKVQ…SLMA). Composition is skewed to basic and acidic residues over residues 352–362 (KQEERIQEQHK) and 427–440 (HGGE…EEAP). Disordered regions lie at residues 352–377 (KQEE…FKEP), 423–452 (PGEG…DPES), and 496–524 (LSEP…DEGE). A compositionally biased stretch (gly residues) spans 508–520 (LGGGHHQAGAQGG).

It belongs to the GOLGA8 family.

In Homo sapiens (Human), this protein is Golgin subfamily A member 8J (GOLGA8J).